A 347-amino-acid chain; its full sequence is BSD domain-containing protein C22A12.14c (347 aa).

Thr-123 and Thr-125 each carry phosphothreonine. Residues 167 to 219 (WEKEISIDGKTEEISLLLEEYPDLRKQMESLVPSEVSYDDFWKRFFWHKEVVQ) form the BSD domain. The interval 229–347 (DEEEIFSWGD…DDDEDDDDWE (119 aa)) is disordered. Phosphoserine is present on residues Ser-235, Ser-241, and Ser-246. A compositionally biased stretch (acidic residues) spans 240–251 (RSDEEESDNEQV). Residues 297–312 (HDGEVDGEVKEEEENK) show a composition bias toward basic and acidic residues. Over residues 313-325 (VSSSSNIEASQSS) the composition is skewed to low complexity. Basic and acidic residues predominate over residues 327–337 (EVKDEANRKVD). Residues 338 to 347 (DDDEDDDDWE) are compositionally biased toward acidic residues.

The protein localises to the cytoplasm. The chain is BSD domain-containing protein C22A12.14c from Schizosaccharomyces pombe (strain 972 / ATCC 24843) (Fission yeast).